The sequence spans 105 residues: Iron-sulfur cluster assembly protein CyaY (105 aa).

This sequence belongs to the frataxin family.

Its function is as follows. Involved in iron-sulfur (Fe-S) cluster assembly. May act as a regulator of Fe-S biogenesis. The sequence is that of Iron-sulfur cluster assembly protein CyaY from Chromobacterium violaceum (strain ATCC 12472 / DSM 30191 / JCM 1249 / CCUG 213 / NBRC 12614 / NCIMB 9131 / NCTC 9757 / MK).